We begin with the raw amino-acid sequence, 388 residues long: LL-diaminopimelate aminotransferase (388 aa).

Y16 and G41 together coordinate substrate. Pyridoxal 5'-phosphate contacts are provided by residues Y70, 104-105 (SK), Y129, N179, Y210, and 239-241 (SLS). 3 residues coordinate substrate: K105, Y129, and N179. K242 carries the N6-(pyridoxal phosphate)lysine modification. R250 contributes to the pyridoxal 5'-phosphate binding site. A substrate-binding site is contributed by R368.

Belongs to the class-I pyridoxal-phosphate-dependent aminotransferase family. LL-diaminopimelate aminotransferase subfamily. Homodimer. Pyridoxal 5'-phosphate is required as a cofactor.

It carries out the reaction (2S,6S)-2,6-diaminopimelate + 2-oxoglutarate = (S)-2,3,4,5-tetrahydrodipicolinate + L-glutamate + H2O + H(+). It functions in the pathway amino-acid biosynthesis; L-lysine biosynthesis via DAP pathway; LL-2,6-diaminopimelate from (S)-tetrahydrodipicolinate (aminotransferase route): step 1/1. Functionally, involved in the synthesis of meso-diaminopimelate (m-DAP or DL-DAP), required for both lysine and peptidoglycan biosynthesis. Catalyzes the direct conversion of tetrahydrodipicolinate to LL-diaminopimelate. This chain is LL-diaminopimelate aminotransferase, found in Nitratidesulfovibrio vulgaris (strain ATCC 29579 / DSM 644 / CCUG 34227 / NCIMB 8303 / VKM B-1760 / Hildenborough) (Desulfovibrio vulgaris).